Here is a 220-residue protein sequence, read N- to C-terminus: CASP-like protein 4B1 (220 aa).

The Cytoplasmic portion of the chain corresponds to 1–74 (MAMVTTEAAA…RWRREDMLDK (74 aa)). The interval 13–56 (TTAATAAAEKPQDVEKPDYAPYNGASTTADGGTGARARRGDGGG) is disordered. A helical membrane pass occupies residues 75–95 (SPLALHAAAAIFAFVALVLVA). Over 96–109 (SNQHGDWMQFDRYQ) the chain is Extracellular. The chain crosses the membrane as a helical span at residues 110–127 (EYRYLLAIASLALLYSLA). Residues 128–152 (QAARHAHRMRGGVDPVSSASARLLD) are Cytoplasmic-facing. Residues 153-173 (FVGDQVVAYLLMSALSAAVPI) form a helical membrane-spanning segment. Residues 174 to 188 (TNRMRSAVVNNFTDA) are Extracellular-facing. Asn184 carries N-linked (GlcNAc...) asparagine glycosylation. Residues 189-209 (TAAAISMAFFSFVALALSAVV) traverse the membrane as a helical segment. The Cytoplasmic portion of the chain corresponds to 210-220 (SGYKLSKQTYM).

It belongs to the Casparian strip membrane proteins (CASP) family. As to quaternary structure, homodimer and heterodimers.

Its subcellular location is the cell membrane. The polypeptide is CASP-like protein 4B1 (Sorghum bicolor (Sorghum)).